The primary structure comprises 114 residues: Large ribosomal subunit protein uL22 (114 aa).

Belongs to the universal ribosomal protein uL22 family. Part of the 50S ribosomal subunit.

This protein binds specifically to 23S rRNA; its binding is stimulated by other ribosomal proteins, e.g. L4, L17, and L20. It is important during the early stages of 50S assembly. It makes multiple contacts with different domains of the 23S rRNA in the assembled 50S subunit and ribosome. In terms of biological role, the globular domain of the protein is located near the polypeptide exit tunnel on the outside of the subunit, while an extended beta-hairpin is found that lines the wall of the exit tunnel in the center of the 70S ribosome. In Streptococcus pyogenes serotype M6 (strain ATCC BAA-946 / MGAS10394), this protein is Large ribosomal subunit protein uL22.